A 679-amino-acid polypeptide reads, in one-letter code: Glycine--tRNA ligase beta subunit (679 aa).

It belongs to the class-II aminoacyl-tRNA synthetase family. In terms of assembly, tetramer of two alpha and two beta subunits.

It localises to the cytoplasm. The catalysed reaction is tRNA(Gly) + glycine + ATP = glycyl-tRNA(Gly) + AMP + diphosphate. This chain is Glycine--tRNA ligase beta subunit, found in Streptococcus agalactiae serotype V (strain ATCC BAA-611 / 2603 V/R).